We begin with the raw amino-acid sequence, 263 residues long: Small ribosomal subunit protein eS4, X isoform (263 aa).

The 63-residue stretch at 42–104 (LPLIIFLRNR…TGEHFRLVYD (63 aa)) folds into the S4 RNA-binding domain. Residue K230 forms a Glycyl lysine isopeptide (Lys-Gly) (interchain with G-Cter in SUMO2) linkage. K233 carries the N6-acetyllysine modification.

This sequence belongs to the eukaryotic ribosomal protein eS4 family. Component of the small ribosomal subunit. Part of the small subunit (SSU) processome, composed of more than 70 proteins and the RNA chaperone small nucleolar RNA (snoRNA) U3. Identified in a IGF2BP1-dependent mRNP granule complex containing untranslated mRNAs.

The protein localises to the cytoplasm. It localises to the nucleus. It is found in the nucleolus. Component of the small ribosomal subunit. The ribosome is a large ribonucleoprotein complex responsible for the synthesis of proteins in the cell. Part of the small subunit (SSU) processome, first precursor of the small eukaryotic ribosomal subunit. During the assembly of the SSU processome in the nucleolus, many ribosome biogenesis factors, an RNA chaperone and ribosomal proteins associate with the nascent pre-rRNA and work in concert to generate RNA folding, modifications, rearrangements and cleavage as well as targeted degradation of pre-ribosomal RNA by the RNA exosome. In Monodelphis domestica (Gray short-tailed opossum), this protein is Small ribosomal subunit protein eS4, X isoform (RPS4X).